The following is a 234-amino-acid chain: Small ribosomal subunit protein eS1y (234 aa).

The span at 1-18 (MAVGKNKRISKGKKGGKK) shows a compositional bias: basic residues. Residues 1-20 (MAVGKNKRISKGKKGGKKKA) form a disordered region.

Belongs to the eukaryotic ribosomal protein eS1 family. Component of the small ribosomal subunit. Mature ribosomes consist of a small (40S) and a large (60S) subunit. The 40S subunit contains about 33 different proteins and 1 molecule of RNA (18S). The 60S subunit contains about 49 different proteins and 3 molecules of RNA (25S, 5.8S and 5S).

The protein resides in the cytoplasm. The polypeptide is Small ribosomal subunit protein eS1y (Vitis vinifera (Grape)).